The chain runs to 257 residues: Enterotoxin type E (257 aa).

Residues 1–27 (MKKTAFILLLFIALTLTTSPLVNGSEK) form the signal peptide. Cys120 and Cys130 form a disulfide bridge. 3 residues coordinate Zn(2+): His211, His249, and Asp251.

Belongs to the staphylococcal/streptococcal toxin family. In terms of assembly, interacts with host MHC class II molecules composed of alpha/HLA-DRA and beta/HLA-DRB1 chains. Interacts with host T-cell receptor beta variable TRBV7-9. Zn(2+) is required as a cofactor.

Its subcellular location is the secreted. Staphylococcal enterotoxin that activates the host immune system by binding as unprocessed molecules to major histocompatibility (MHC) complex class II and T-cell receptor (TCR) molecules. In turn, this ternary complex activates a large number of T-lymphocytes initiating a systemic release of pro-inflammatory cytokines. Also causes the intoxication staphylococcal food poisoning syndrome. The chain is Enterotoxin type E (entE) from Staphylococcus aureus.